We begin with the raw amino-acid sequence, 1169 residues long: ATP-dependent helicase/deoxyribonuclease subunit B (1169 aa).

Residues 1-296 (MTLRIVSGRS…QHVEANFANM (296 aa)) form the UvrD-like helicase ATP-binding domain. Position 8-15 (8-15 (GRSGTGKS)) interacts with ATP. The UvrD-like helicase C-terminal domain occupies 276–582 (YYTQRFQSED…EFSRIPPTLD (307 aa)). [4Fe-4S] cluster-binding residues include cysteine 804, cysteine 1129, cysteine 1132, and cysteine 1138.

Belongs to the helicase family. AddB/RexB type 1 subfamily. Heterodimer of AddA and AddB. It depends on Mg(2+) as a cofactor. The cofactor is [4Fe-4S] cluster.

The heterodimer acts as both an ATP-dependent DNA helicase and an ATP-dependent, dual-direction single-stranded exonuclease. Recognizes the chi site generating a DNA molecule suitable for the initiation of homologous recombination. The AddB subunit has 5' -&gt; 3' nuclease activity but not helicase activity. This is ATP-dependent helicase/deoxyribonuclease subunit B from Lysinibacillus sphaericus (strain C3-41).